A 613-amino-acid chain; its full sequence is Ribosome-associated molecular chaperone SSB1 (613 aa).

Residues 1 to 391 form a nucleotide binding domain (NBD) region; sequence MADGVFQGAI…ILTGQSTSDE (391 aa). ATP is bound by residues 16 to 18, K73, 205 to 207, 271 to 278, and G342; these read TTY, GGT, and ERAKRTLS. The inter-domain linker stretch occupies residues 392–402; it reads TKDLLLLDVAP. The tract at residues 403-613 is substrate binding domain (SBD); sequence LSLGVGMQGD…RVVTKAMSSR (211 aa). A lid domain (SBDalpha) region spans residues 516-612; sequence SEDIEKMVNQ…KRVVTKAMSS (97 aa). Positions 574–582 match the Nuclear export signal motif; sequence IEAALADAL.

It belongs to the heat shock protein 70 family. Ssb-type Hsp70 subfamily. As to quaternary structure, binds to ribosomes. Binds close to the ribosomal tunnel exit via contacts with both ribosomal proteins and rRNA. Directly interacts with nascent polypeptides. This interaction is dependent on the ribosome-associated complex (RAC). Interacts with SSE1. Interacts with FES1.

Its subcellular location is the cytoplasm. It catalyses the reaction ATP + H2O = ADP + phosphate + H(+). Its function is as follows. Ribosome-bound, Hsp70-type chaperone that assists in the cotranslational folding of newly synthesized proteins in the cytosol. Stimulates folding by interacting with nascent chains, binding to short, largely hydrophobic sequences exposed by unfolded proteins, thereby stabilizing longer, more slowly translated, and aggregation-prone nascent polypeptides and domains that cannot fold stably until fully synthesized. The Hsp70-protein substrate interaction depends on ATP-binding and on allosteric regulation between the NBD and the SBD. The ATP-bound state is characterized by a fast exchange rate of substrate (low affinity state), while in the ADP-bound state exchange is much slower (high affinity state). During the Hsp70 cycle, the chaperone switches between the ATP-bound state (open conformation) and the ADP-bound state (closed conformation) by major conformational rearrangements involving mainly the lid domain. Ssb cooperates with a specific Hsp40/Hsp70 co-chaperone termed the ribosome-associated complex (RAC), which stimulates the ATPase activity of the ribosome-associated pool of Ssbs and switches it to the high affinity substrate binding state. Hsp110 chaperone SSE1 and FES1 act as nucleotide exchange factors that cause substrate release. The polypeptide is Ribosome-associated molecular chaperone SSB1 (SSB1) (Nakaseomyces delphensis (Yeast)).